A 102-amino-acid polypeptide reads, in one-letter code: Small ribosomal subunit protein uS10 (102 aa).

It belongs to the universal ribosomal protein uS10 family. Part of the 30S ribosomal subunit.

Its function is as follows. Involved in the binding of tRNA to the ribosomes. This is Small ribosomal subunit protein uS10 from Clostridium acetobutylicum (strain ATCC 824 / DSM 792 / JCM 1419 / IAM 19013 / LMG 5710 / NBRC 13948 / NRRL B-527 / VKM B-1787 / 2291 / W).